The chain runs to 34 residues: Putative protein YmiB (34 aa).

A helical membrane pass occupies residues 7–24 (TAAKRIVFFIYLFVIQFW).

The protein localises to the membrane. This is Putative protein YmiB (ymiB) from Escherichia coli (strain K12).